Here is a 481-residue protein sequence, read N- to C-terminus: PRAME family member 22 (481 aa).

Residues 99 to 126 (RWKLQVLELRDVDENFWTIWSGARPLSC) form an LRR 1; degenerate repeat. Residues 181-205 (HLCCTKVVNYSMSILNFRNILETVY) form an LRR 2; degenerate repeat. The LRR 3; degenerate repeat unit spans residues 206–232 (PDSIQVLEIWNMCWPCMIVEFSRYLSQ). Residues 233–267 (MRNLRKLFISDGCRYLLSSDSQEQLVAEFSSVLLR) form an LRR 4; degenerate repeat. LRR repeat units lie at residues 268 to 293 (LEYL…IRCL), 294 to 325 (RSPL…SQLK), 326 to 344 (QLNL…PLRA), 350 to 377 (AATL…ALSC), and 378 to 402 (CSNL…LLRH).

This sequence belongs to the PRAME family.

This is PRAME family member 22 from Homo sapiens (Human).